We begin with the raw amino-acid sequence, 231 residues long: Membrane protein YknW (231 aa).

Transmembrane regions (helical) follow at residues 38–58 (VWGP…LQSL), 93–113 (GAII…WLCV), 128–148 (LSLF…IVAF), 171–191 (LASV…LLAI), and 205–225 (WISA…SGLI).

In terms of assembly, interacts with a complex composed of YknX, YknY and YknZ.

It localises to the cell membrane. Functionally, part of an unusual four-component transporter, which is required for protection against the killing factor SdpC (sporulation-delaying protein). Has a role in the assembly of the YknXYZ complex. This chain is Membrane protein YknW (yknW), found in Bacillus subtilis (strain 168).